The primary structure comprises 699 residues: eEF1A lysine and N-terminal methyltransferase (699 aa).

Residue Met-1 is modified to N-acetylmethionine. Ser-267 carries the post-translational modification Phosphoserine. Positions 433 to 460 (VSHRAQKKRKKDRKKHRPADTPEDLPAA) are disordered. Positions 436 to 449 (RAQKKRKKDRKKHR) are enriched in basic residues.

This sequence belongs to the methyltransferase superfamily. In terms of assembly, forms a tripartite complex containing GAB1, METTL13 and SPRY2. Within the complex interacts with GAB1 and SPRY2.

The protein localises to the cytoplasm. Its subcellular location is the nucleus. The protein resides in the mitochondrion. It carries out the reaction L-lysyl-[protein] + S-adenosyl-L-methionine = N(6)-methyl-L-lysyl-[protein] + S-adenosyl-L-homocysteine + H(+). The catalysed reaction is N(6)-methyl-L-lysyl-[protein] + S-adenosyl-L-methionine = N(6),N(6)-dimethyl-L-lysyl-[protein] + S-adenosyl-L-homocysteine + H(+). It catalyses the reaction N-terminal glycyl-L-lysyl-L-glutamyl-[protein] + 3 S-adenosyl-L-methionine = N-terminal N,N,N-trimethyl-glycyl-L-lysyl-L-glutamyl-[protein] + 3 S-adenosyl-L-homocysteine + 3 H(+). In terms of biological role, dual methyltransferase that catalyzes methylation of elongation factor 1-alpha (EEF1A1 and EEF1A2) at two different positions, and is therefore involved in the regulation of mRNA translation. Via its C-terminus, methylates EEF1A1 and EEF1A2 at the N-terminal residue 'Gly-2'. Via its N-terminus dimethylates EEF1A1 and EEF1A2 at residue 'Lys-55'. Has no activity towards core histones H2A, H2B, H3 and H4. The chain is eEF1A lysine and N-terminal methyltransferase (METTL13) from Bos taurus (Bovine).